The sequence spans 264 residues: 3-methyl-2-oxobutanoate hydroxymethyltransferase (264 aa).

Asp45 and Asp84 together coordinate Mg(2+). Residues Asp45–Ser46, Asp84, and Lys112 each bind 3-methyl-2-oxobutanoate. Glu114 provides a ligand contact to Mg(2+). The active-site Proton acceptor is the Glu181.

It belongs to the PanB family. As to quaternary structure, homodecamer; pentamer of dimers. Mg(2+) is required as a cofactor.

It localises to the cytoplasm. The enzyme catalyses 3-methyl-2-oxobutanoate + (6R)-5,10-methylene-5,6,7,8-tetrahydrofolate + H2O = 2-dehydropantoate + (6S)-5,6,7,8-tetrahydrofolate. Its pathway is cofactor biosynthesis; (R)-pantothenate biosynthesis; (R)-pantoate from 3-methyl-2-oxobutanoate: step 1/2. Its function is as follows. Catalyzes the reversible reaction in which hydroxymethyl group from 5,10-methylenetetrahydrofolate is transferred onto alpha-ketoisovalerate to form ketopantoate. This chain is 3-methyl-2-oxobutanoate hydroxymethyltransferase, found in Photobacterium profundum (strain SS9).